The sequence spans 616 residues: RNA-directed RNA polymerase (616 aa).

It catalyses the reaction RNA(n) + a ribonucleoside 5'-triphosphate = RNA(n+1) + diphosphate. Functionally, RNA-dependent RNA polymerase which replicates the viral genome. The chain is RNA-directed RNA polymerase from White clover cryptic virus 1 (isolate Boccardo/2004) (WCCV-1).